We begin with the raw amino-acid sequence, 331 residues long: Betaine-homocysteine S-methyltransferase (331 aa).

A Hcy-binding domain is found at 3–324; the sequence is VNQKWNWDTK…TDVLAIRKYV (322 aa). 3 residues coordinate Zn(2+): C243, C309, and C310.

It belongs to the Betaine-homocysteine S-methyltransferase, BHMT family. It depends on Zn(2+) as a cofactor.

It carries out the reaction L-homocysteine + glycine betaine = N,N-dimethylglycine + L-methionine. Its pathway is amino-acid biosynthesis; L-methionine biosynthesis via de novo pathway. Its function is as follows. Involved in the regulation of homocysteine metabolism. Converts betaine and homocysteine to dimethylglycine and methionine, respectively. The polypeptide is Betaine-homocysteine S-methyltransferase (Drosophila melanogaster (Fruit fly)).